The primary structure comprises 312 residues: Iron/alpha-ketoglutarate-dependent dioxygenase penM (312 aa).

The Fe cation site is built by histidine 134, aspartate 136, and histidine 211. Residues 287-312 (LGLKSEQPLPDGMEKGSMQETDIGGQ) form a disordered region.

The protein belongs to the PhyH family. In terms of assembly, homodimer. Requires Fe cation as cofactor.

The catalysed reaction is (-)-cyclopeptine + 2-oxoglutarate + O2 = (Z)-dehydrocyclopeptine + succinate + CO2 + H2O. It catalyses the reaction (Z)-dehydrocyclopeptine + 2-oxoglutarate + O2 = (-)-cyclopenine + succinate + CO2. It carries out the reaction (-)-4'-methoxycyclopeptine + 2-oxoglutarate + O2 = (Z)-4'-methoxydehydrocyclopeptine + succinate + CO2 + H2O. The enzyme catalyses (Z)-4'-methoxydehydrocyclopeptine + 2-oxoglutarate + O2 = (-)-4'-methoxycyclopenine + succinate + CO2. Its pathway is secondary metabolite biosynthesis. It functions in the pathway alkaloid biosynthesis. It participates in mycotoxin biosynthesis. Functionally, iron/alpha-ketoglutarate-dependent dioxygenase; part of the gene cluster that mediates the biosynthesis of penigequinolones, potent insecticidal alkaloids that contain a highly modified 10-carbon prenyl group. The first stage is catalyzed by the nonribosomal peptide synthetase penN that condenses anthranilic acid and O-methyl-L-tyrosine to produce 4'-methoxycyclopeptin. 4'-methoxycyclopeptin is then converted to 4'-methoxydehydrocyclopeptin by the ketoglutarate-dependent dioxygenase penM through dehydrogenation to form a double bond between C-alpha and C-beta of the O-methyltyrosine side chain. PenM also converts its first product methoxydehydrocyclopeptin to 4'-methoxycyclopenin. The following conversion of 4'methoxycyclopenin into 4'-methoxyviridicatin is catalyzed by the cyclopenase penL. 4'-methoxyviridicatin is the precursor of quinolone natural products, and is further converted to quinolinone B. The prenyltransferase penI then catalyzes the canonical Friedel-Crafts alkylation of quinolinone B with dimethylallyl cation to yield dimethylallyl quinolone, which is subjected to FAD-dependent dehydrogenation by the FAD-linked oxidoreductase penH to yield conjugated aryl diene. The delta(3') double bond then serves as the site of the second alkylation with DMAPP catalyzed by the prenyltransferase penG to yield a carbenium ion intermediate, which can be attacked by H(2)O to yield a styrenyl quinolone containing a C3'-hydroxyprenyl chain, or undergo cyclization to yield yaequinolones J1 and J2. The conversion of the styrenyl quinolone into the tetrahydrofuran-containing yaequinolone C is performed by the FAD-dependent monooxygenase penE and involves epoxidation of the terminal C7'-C8' olefin, followed by epoxide ring opening initiated by the C3' hydroxyl group. The predicted cysteine hydrolase penJ acts as an epoxide hydrolase that enhances the rate of the 5-exo-tet cyclization step, increasing the yield of yaequinolone C. PenF catalyzes the cationic rearrangement of the epoxide formed by penE (before ring opening to produce yaequinolone C) into yaequinolone D. Finally, the short-chain dehydrogenase/reductase (SDR)-like reductase penD, catalyzes both the dehydration of yaequinolone D and the reduction of the resulting oxonium to yield penigequinolone. This chain is Iron/alpha-ketoglutarate-dependent dioxygenase penM, found in Penicillium thymicola.